The sequence spans 389 residues: Putative phosphoserine aminotransferase (389 aa).

Arg45 provides a ligand contact to L-glutamate. Pyridoxal 5'-phosphate-binding positions include 79 to 80, Trp114, Thr169, Asp191, and Gln214; that span reads GT. Lys215 carries the N6-(pyridoxal phosphate)lysine modification. 265 to 266 contributes to the pyridoxal 5'-phosphate binding site; that stretch reads NT.

The protein belongs to the class-V pyridoxal-phosphate-dependent aminotransferase family. SerC subfamily. In terms of assembly, homodimer. It depends on pyridoxal 5'-phosphate as a cofactor.

The enzyme catalyses O-phospho-L-serine + 2-oxoglutarate = 3-phosphooxypyruvate + L-glutamate. It catalyses the reaction 4-(phosphooxy)-L-threonine + 2-oxoglutarate = (R)-3-hydroxy-2-oxo-4-phosphooxybutanoate + L-glutamate. It participates in amino-acid biosynthesis; L-serine biosynthesis; L-serine from 3-phospho-D-glycerate: step 2/3. The protein operates within cofactor biosynthesis; pyridoxine 5'-phosphate biosynthesis; pyridoxine 5'-phosphate from D-erythrose 4-phosphate: step 3/5. Catalyzes the reversible conversion of 3-phosphohydroxypyruvate to phosphoserine and of 3-hydroxy-2-oxo-4-phosphonooxybutanoate to phosphohydroxythreonine. This Schizosaccharomyces pombe (strain 972 / ATCC 24843) (Fission yeast) protein is Putative phosphoserine aminotransferase.